The primary structure comprises 89 residues: Small ribosomal subunit protein bS18 (89 aa).

This sequence belongs to the bacterial ribosomal protein bS18 family. In terms of assembly, part of the 30S ribosomal subunit. Forms a tight heterodimer with protein bS6.

Its function is as follows. Binds as a heterodimer with protein bS6 to the central domain of the 16S rRNA, where it helps stabilize the platform of the 30S subunit. The protein is Small ribosomal subunit protein bS18 of Phocaeicola vulgatus (strain ATCC 8482 / DSM 1447 / JCM 5826 / CCUG 4940 / NBRC 14291 / NCTC 11154) (Bacteroides vulgatus).